Here is a 26-residue protein sequence, read N- to C-terminus: uncharacterized protein (26 aa).

In terms of processing, phosphorylated by YfhK.

Its function is as follows. Probable member of a two-component regulatory system YfhA/YfhK. This is an uncharacterized protein from Klebsiella oxytoca.